The primary structure comprises 156 residues: Small ribosomal subunit protein uS7 (156 aa).

It belongs to the universal ribosomal protein uS7 family. Part of the 30S ribosomal subunit. Contacts proteins S9 and S11.

In terms of biological role, one of the primary rRNA binding proteins, it binds directly to 16S rRNA where it nucleates assembly of the head domain of the 30S subunit. Is located at the subunit interface close to the decoding center, probably blocks exit of the E-site tRNA. The protein is Small ribosomal subunit protein uS7 of Afipia carboxidovorans (strain ATCC 49405 / DSM 1227 / KCTC 32145 / OM5) (Oligotropha carboxidovorans).